The chain runs to 439 residues: Argininosuccinate lyase (439 aa).

Belongs to the lyase 1 family. Argininosuccinate lyase subfamily.

Its subcellular location is the cytoplasm. It catalyses the reaction 2-(N(omega)-L-arginino)succinate = fumarate + L-arginine. It functions in the pathway amino-acid biosynthesis; L-arginine biosynthesis; L-arginine from L-ornithine and carbamoyl phosphate: step 3/3. This is Argininosuccinate lyase from Caldanaerobacter subterraneus subsp. tengcongensis (strain DSM 15242 / JCM 11007 / NBRC 100824 / MB4) (Thermoanaerobacter tengcongensis).